A 264-amino-acid polypeptide reads, in one-letter code: 5'-nucleotidase SurE (264 aa).

Residues Asp-10, Asp-11, Ser-43, and Asn-99 each contribute to the a divalent metal cation site.

This sequence belongs to the SurE nucleotidase family. It depends on a divalent metal cation as a cofactor.

The protein resides in the cytoplasm. The catalysed reaction is a ribonucleoside 5'-phosphate + H2O = a ribonucleoside + phosphate. Functionally, nucleotidase that shows phosphatase activity on nucleoside 5'-monophosphates. The polypeptide is 5'-nucleotidase SurE (Methanococcus maripaludis (strain C6 / ATCC BAA-1332)).